We begin with the raw amino-acid sequence, 276 residues long: Cell division protein FtsQ (276 aa).

At 1–27 (MSQAALNTRNSEEEVSSRRNNGTRLAG) the chain is on the cytoplasmic side. The chain crosses the membrane as a helical span at residues 28–48 (ILFLLTVLTTVLVSGWVVLGW). The Periplasmic segment spans residues 49–276 (MEDAQRLPLS…QQNQAQAEQQ (228 aa)). Residues 55-126 (LPLSKLVLTG…DELKIHLVEY (72 aa)) form the POTRA domain. Residues 255 to 276 (GWAPLPPEESTQQQNQAQAEQQ) are disordered. The segment covering 266–276 (QQQNQAQAEQQ) has biased composition (low complexity).

This sequence belongs to the FtsQ/DivIB family. FtsQ subfamily. As to quaternary structure, part of a complex composed of FtsB, FtsL and FtsQ. The complex can be formed before its localization to the division site. This tripartite complex can be divided further into a subcomplex of FtsB and FtsL, which forms in the absence of FtsQ. Interacts with FtsA, FtsK, FtsL, FtsB, FtsW, FtsI, FtsN, FtsX and YmgF.

The protein localises to the cell inner membrane. In terms of biological role, essential cell division protein. May link together the upstream cell division proteins, which are predominantly cytoplasmic, with the downstream cell division proteins, which are predominantly periplasmic. May control correct divisome assembly. The chain is Cell division protein FtsQ from Escherichia coli (strain K12).